The primary structure comprises 369 residues: Delta(12)-oleate desaturase (369 aa).

2 helical membrane-spanning segments follow: residues 41 to 61 (LLSD…YFPL) and 69 to 89 (IAWP…WVIA). The Histidine box-1 motif lies at 90-94 (HECGH). A helical membrane pass occupies residues 102-122 (LIDDIVGLFFHSALLVPYFSW). A Histidine box-2 motif is present at residues 126 to 130 (HRRHH). Helical transmembrane passes span 164–184 (LISL…FNMS), 207–227 (WIQV…LYRI), and 234–254 (FWVM…LVLI). The Histidine box-3 motif lies at 300–304 (HVVHH).

The protein belongs to the fatty acid desaturase type 1 family.

It localises to the membrane. The protein operates within lipid metabolism; polyunsaturated fatty acid biosynthesis. In terms of biological role, delta(12)-fatty acid desaturase producing in a heterologous system linoleic acid (18:2(9Z,12Z)) and to a lower extent hexadecadienoic acid (16:2(9Z,12Z)). The chain is Delta(12)-oleate desaturase from Trichosanthes kirilowii (Chinese snake gourd).